Here is a 367-residue protein sequence, read N- to C-terminus: uncharacterized protein (367 aa).

Residues 6–26 (IAAGVVVALAAVWCTSAWFTG) traverse the membrane as a helical segment.

It to E.coli YdgA and YihF.

It localises to the membrane. This is an uncharacterized protein from Haemophilus influenzae (strain ATCC 51907 / DSM 11121 / KW20 / Rd).